Reading from the N-terminus, the 47-residue chain is Bifunctional chitinase/lysozyme (47 aa).

The region spanning 1–47 (GGIAIYWGQNGNEGTLTQTCNTGKYSYVNIAFLNKFGNGQTPEINLA) is the GH18 domain.

Belongs to the glycosyl hydrolase 18 family. Chitinase class II subfamily.

Its subcellular location is the secreted. The protein resides in the extracellular space. It carries out the reaction Random endo-hydrolysis of N-acetyl-beta-D-glucosaminide (1-&gt;4)-beta-linkages in chitin and chitodextrins.. It catalyses the reaction Hydrolysis of (1-&gt;4)-beta-linkages between N-acetylmuramic acid and N-acetyl-D-glucosamine residues in a peptidoglycan and between N-acetyl-D-glucosamine residues in chitodextrins.. Its function is as follows. Bifunctional enzyme with lysozyme/chitinase activity. The protein is Bifunctional chitinase/lysozyme of Parthenocissus quinquefolia (Virginia creeper).